The primary structure comprises 302 residues: NADH-cytochrome b5 reductase 2 (302 aa).

Positions 1 to 41 are cleaved as a propeptide — removed in mature form; the sequence is MFSRLSRSHSKALPIALGTVAIAAATAFYFANRNQHSFVFN. Residues 12–32 traverse the membrane as a helical segment; sequence ALPIALGTVAIAAATAFYFAN. The region spanning 51–155 is the FAD-binding FR-type domain; the sequence is DKWIDLPISK…KGPIMKWKWQ (105 aa). Residue 158-193 participates in FAD binding; the sequence is QFKSITLLGAGTGINPLYQLAHHIVENPNDKTKVNL. Ser-278 bears the Phosphoserine mark.

Belongs to the flavoprotein pyridine nucleotide cytochrome reductase family. FAD is required as a cofactor. Post-translationally, there are two isoforms of NADH-cytochrome b5 reductase, a 34 kDa form (p34) and a 32 kDa form (p32). The p34 form becomes firmly anchored to the outer mitochondrial membrane after an incomplete translocation arrest. The p32 form is formed after translocation of the p34 precursor to the inner mitochondrial membrane, where it is processed by mitochondrial inner membrane peptidase (IMP) complex and released to the intermembrane space.

Its subcellular location is the mitochondrion intermembrane space. The protein resides in the mitochondrion outer membrane. It carries out the reaction 2 Fe(III)-[cytochrome b5] + NADH = 2 Fe(II)-[cytochrome b5] + NAD(+) + H(+). Its function is as follows. The outer membrane form may mediate the reduction of outer membrane cytochrome b5, and the soluble inter-membrane space form may transfer electrons from external NADH to cytochrome c, thereby mediating an antimycin-insensitive, energy-coupled oxidation of external NADH by yeast mitochondria. Involved in the reduction of D-erythroascorbyl free radicals. The polypeptide is NADH-cytochrome b5 reductase 2 (MCR1) (Saccharomyces cerevisiae (strain YJM789) (Baker's yeast)).